A 1040-amino-acid polypeptide reads, in one-letter code: Multidrug resistance protein MdtB (1040 aa).

The next 12 membrane-spanning stretches (helical) occupy residues 25–45 (LLMAAMLLAGIIGYRFLPVAA), 347–367 (LMLAIALVVMIIYLFLRNIPA), 369–389 (IIPGVAVPLSLIGTFAVMVFL), 396–416 (LTLMALTIATGFVVDDAIVVI), 440–460 (IGFTIISLTFSLIAVLIPLLF), 472–492 (FAVTLAVAILISAVVSLTLTP), 537–557 (WLTLSVAFATLLLSVMLWIVI), 869–889 (LIVAAVVAMYIVLGVLYESFI), 890–910 (HPITILSTLPTAGVGALLALM), 911–931 (IAGSELDIIAIIGIILLIGIV), 968–988 (ILMTTLAALLGALPLMLSTGV), and 998–1018 (IAMVGGLLVSQILTLFTTPVI).

Belongs to the resistance-nodulation-cell division (RND) (TC 2.A.6) family. MdtB subfamily. Part of a tripartite efflux system composed of MdtA, MdtB and MdtC. MdtB forms a heteromultimer with MdtC.

Its subcellular location is the cell inner membrane. In Salmonella arizonae (strain ATCC BAA-731 / CDC346-86 / RSK2980), this protein is Multidrug resistance protein MdtB.